Consider the following 281-residue polypeptide: Bifunctional protein FolD (281 aa).

NADP(+)-binding positions include 159 to 161, S184, and I225; that span reads NRS.

It belongs to the tetrahydrofolate dehydrogenase/cyclohydrolase family. In terms of assembly, homodimer.

The catalysed reaction is (6R)-5,10-methylene-5,6,7,8-tetrahydrofolate + NADP(+) = (6R)-5,10-methenyltetrahydrofolate + NADPH. It catalyses the reaction (6R)-5,10-methenyltetrahydrofolate + H2O = (6R)-10-formyltetrahydrofolate + H(+). The protein operates within one-carbon metabolism; tetrahydrofolate interconversion. Functionally, catalyzes the oxidation of 5,10-methylenetetrahydrofolate to 5,10-methenyltetrahydrofolate and then the hydrolysis of 5,10-methenyltetrahydrofolate to 10-formyltetrahydrofolate. This Thermoplasma volcanium (strain ATCC 51530 / DSM 4299 / JCM 9571 / NBRC 15438 / GSS1) protein is Bifunctional protein FolD.